The sequence spans 852 residues: Leucine--tRNA ligase (852 aa).

Residues 41 to 51 (PYPSGRIHIGH) carry the 'HIGH' region motif. The 'KMSKS' region motif lies at 623–627 (KMSKS). Lysine 626 is an ATP binding site.

This sequence belongs to the class-I aminoacyl-tRNA synthetase family.

Its subcellular location is the cytoplasm. It catalyses the reaction tRNA(Leu) + L-leucine + ATP = L-leucyl-tRNA(Leu) + AMP + diphosphate. The protein is Leucine--tRNA ligase of Ruegeria pomeroyi (strain ATCC 700808 / DSM 15171 / DSS-3) (Silicibacter pomeroyi).